The chain runs to 303 residues: N-acetyl-D-glucosamine kinase (303 aa).

Residues 4-11 (GFDIGGTK) and 133-140 (GVGGGLVL) each bind ATP. 4 residues coordinate Zn(2+): H157, C177, C179, and C184.

Belongs to the ROK (NagC/XylR) family. NagK subfamily.

The enzyme catalyses N-acetyl-D-glucosamine + ATP = N-acetyl-D-glucosamine 6-phosphate + ADP + H(+). It participates in cell wall biogenesis; peptidoglycan recycling. Its function is as follows. Catalyzes the phosphorylation of N-acetyl-D-glucosamine (GlcNAc) derived from cell-wall degradation, yielding GlcNAc-6-P. In Salmonella arizonae (strain ATCC BAA-731 / CDC346-86 / RSK2980), this protein is N-acetyl-D-glucosamine kinase.